Consider the following 257-residue polypeptide: Glutamate racemase (257 aa).

Substrate-binding positions include 12–13 (DS) and 44–45 (YG). The active-site Proton donor/acceptor is cysteine 75. 76-77 (NT) lines the substrate pocket. The Proton donor/acceptor role is filled by cysteine 185. 186–187 (TH) contacts substrate.

This sequence belongs to the aspartate/glutamate racemases family.

The catalysed reaction is L-glutamate = D-glutamate. It functions in the pathway cell wall biogenesis; peptidoglycan biosynthesis. In terms of biological role, provides the (R)-glutamate required for cell wall biosynthesis. The polypeptide is Glutamate racemase (Clostridium botulinum (strain Okra / Type B1)).